The sequence spans 203 residues: E3 ubiquitin-protein ligase RNF152 (203 aa).

An RING-type zinc finger spans residues C12 to R55. The helical transmembrane segment at S167–L187 threads the bilayer.

This sequence belongs to the RNF152 family.

The protein resides in the lysosome membrane. The enzyme catalyses S-ubiquitinyl-[E2 ubiquitin-conjugating enzyme]-L-cysteine + [acceptor protein]-L-lysine = [E2 ubiquitin-conjugating enzyme]-L-cysteine + N(6)-ubiquitinyl-[acceptor protein]-L-lysine.. The protein operates within protein modification; protein ubiquitination. E3 ubiquitin-protein ligase that acts as a negative regulator of mTORC1 signaling by mediating ubiquitination of RagA/RRAGA and RHEB. Catalyzes 'Lys-63'-linked polyubiquitination of RagA/RRAGA in response to amino acid starvation, thereby regulating mTORC1 signaling. Also mediates monoubiquitination of RHEB, promoting its association with the TSC-TBC complex and subsequent inhibition. Also mediates 'Lys-48'-linked polyubiquitination of target proteins and their subsequent targeting to the proteasome for degradation. The polypeptide is E3 ubiquitin-protein ligase RNF152 (Gallus gallus (Chicken)).